We begin with the raw amino-acid sequence, 139 residues long: Large ribosomal subunit protein bL17 (139 aa).

This sequence belongs to the bacterial ribosomal protein bL17 family. As to quaternary structure, part of the 50S ribosomal subunit. Contacts protein L32.

The chain is Large ribosomal subunit protein bL17 from Afipia carboxidovorans (strain ATCC 49405 / DSM 1227 / KCTC 32145 / OM5) (Oligotropha carboxidovorans).